Here is a 298-residue protein sequence, read N- to C-terminus: Homoserine kinase (298 aa).

ATP is bound at residue 85-95; it reads PMGGLGSSAAS.

Belongs to the GHMP kinase family. Homoserine kinase subfamily.

Its subcellular location is the cytoplasm. The catalysed reaction is L-homoserine + ATP = O-phospho-L-homoserine + ADP + H(+). It participates in amino-acid biosynthesis; L-threonine biosynthesis; L-threonine from L-aspartate: step 4/5. In terms of biological role, catalyzes the ATP-dependent phosphorylation of L-homoserine to L-homoserine phosphate. The protein is Homoserine kinase of Methanopyrus kandleri (strain AV19 / DSM 6324 / JCM 9639 / NBRC 100938).